A 176-amino-acid chain; its full sequence is ATP-dependent protease subunit HslV (176 aa).

Residue threonine 5 is part of the active site. Na(+) contacts are provided by serine 161, cysteine 164, and threonine 167.

It belongs to the peptidase T1B family. HslV subfamily. A double ring-shaped homohexamer of HslV is capped on each side by a ring-shaped HslU homohexamer. The assembly of the HslU/HslV complex is dependent on binding of ATP.

It is found in the cytoplasm. The enzyme catalyses ATP-dependent cleavage of peptide bonds with broad specificity.. Its activity is regulated as follows. Allosterically activated by HslU binding. Its function is as follows. Protease subunit of a proteasome-like degradation complex believed to be a general protein degrading machinery. The chain is ATP-dependent protease subunit HslV from Desulfitobacterium hafniense (strain Y51).